Consider the following 343-residue polypeptide: Ketol-acid reductoisomerase (NADP(+)) (343 aa).

The KARI N-terminal Rossmann domain occupies 7 to 186 (TTVYYDEDAD…GCTRAGVIET (180 aa)). Residues 30 to 33 (YGSQ), R53, S56, S58, and 88 to 91 (DTIQ) each bind NADP(+). H112 is a catalytic residue. G138 lines the NADP(+) pocket. Residues 187 to 329 (SFQEEVETDL…ENLRELFAWG (143 aa)) form the KARI C-terminal knotted domain. Residues D195, E199, E231, and E235 each contribute to the Mg(2+) site. S256 contacts substrate.

It belongs to the ketol-acid reductoisomerase family. The cofactor is Mg(2+).

It carries out the reaction (2R)-2,3-dihydroxy-3-methylbutanoate + NADP(+) = (2S)-2-acetolactate + NADPH + H(+). The catalysed reaction is (2R,3R)-2,3-dihydroxy-3-methylpentanoate + NADP(+) = (S)-2-ethyl-2-hydroxy-3-oxobutanoate + NADPH + H(+). Its pathway is amino-acid biosynthesis; L-isoleucine biosynthesis; L-isoleucine from 2-oxobutanoate: step 2/4. It functions in the pathway amino-acid biosynthesis; L-valine biosynthesis; L-valine from pyruvate: step 2/4. In terms of biological role, involved in the biosynthesis of branched-chain amino acids (BCAA). Catalyzes an alkyl-migration followed by a ketol-acid reduction of (S)-2-acetolactate (S2AL) to yield (R)-2,3-dihydroxy-isovalerate. In the isomerase reaction, S2AL is rearranged via a Mg-dependent methyl migration to produce 3-hydroxy-3-methyl-2-ketobutyrate (HMKB). In the reductase reaction, this 2-ketoacid undergoes a metal-dependent reduction by NADPH to yield (R)-2,3-dihydroxy-isovalerate. This chain is Ketol-acid reductoisomerase (NADP(+)), found in Haloarcula marismortui (strain ATCC 43049 / DSM 3752 / JCM 8966 / VKM B-1809) (Halobacterium marismortui).